A 170-amino-acid chain; its full sequence is Peptide deformylase (170 aa).

Fe cation is bound by residues Cys91 and His133. Residue Glu134 is part of the active site. Fe cation is bound at residue His137.

This sequence belongs to the polypeptide deformylase family. It depends on Fe(2+) as a cofactor.

The enzyme catalyses N-terminal N-formyl-L-methionyl-[peptide] + H2O = N-terminal L-methionyl-[peptide] + formate. Removes the formyl group from the N-terminal Met of newly synthesized proteins. Requires at least a dipeptide for an efficient rate of reaction. N-terminal L-methionine is a prerequisite for activity but the enzyme has broad specificity at other positions. The protein is Peptide deformylase of Pasteurella multocida (strain Pm70).